A 501-amino-acid chain; its full sequence is Probable cytochrome P450 508A4 (501 aa).

Residues 1 to 21 (MIMLIKVFVLLLVVYILHNSY) traverse the membrane as a helical segment. C445 serves as a coordination point for heme.

This sequence belongs to the cytochrome P450 family. The cofactor is heme.

It localises to the membrane. The chain is Probable cytochrome P450 508A4 (cyp508A4) from Dictyostelium discoideum (Social amoeba).